We begin with the raw amino-acid sequence, 647 residues long: Protein cueball (647 aa).

The signal sequence occupies residues 1–22; sequence MLWCPSVLVPLIAVAACLPVLA. The Extracellular segment spans residues 23–534; that stretch reads IGTPLEWEFA…CMTPSPWTSN (512 aa). N-linked (GlcNAc...) asparagine glycosylation is found at N80 and N106. LDL-receptor class B repeat units lie at residues 119 to 166, 167 to 211, and 212 to 257; these read RNLF…DVCR, RKLY…DQLS, and DRIF…TNDA. An N-linked (GlcNAc...) asparagine glycan is attached at N175. N316 is a glycosylation site (N-linked (GlcNAc...) asparagine). EGF-like domains lie at 365-401 and 436-473; these read DEKT…SRCE and EISK…ERCE. Intrachain disulfides connect C376/C389, C391/C400, C440/C450, C444/C461, and C463/C472. An N-linked (GlcNAc...) asparagine glycan is attached at N475. The chain crosses the membrane as a helical span at residues 535–555; that stretch reads VIIVLVLGIVSCFFLVAVIVH. Residues 556-647 lie on the Cytoplasmic side of the membrane; the sequence is GFRRLYKPKR…LIHNMDDDLY (92 aa).

Belongs to the cueball family.

The protein resides in the cell membrane. Functionally, has a role in spermatogenesis and oogenesis. The polypeptide is Protein cueball (Drosophila pseudoobscura pseudoobscura (Fruit fly)).